A 419-amino-acid polypeptide reads, in one-letter code: 4-hydroxyphenylpyruvate dioxygenase (419 aa).

VOC domains follow at residues 37-185 (GYDH…LLSR) and 216-376 (RIDH…LFTR). Fe cation-binding residues include histidine 219, histidine 302, and glutamate 387.

Belongs to the 4HPPD family. Fe cation is required as a cofactor.

It catalyses the reaction 3-(4-hydroxyphenyl)pyruvate + O2 = homogentisate + CO2. It participates in amino-acid degradation; L-phenylalanine degradation; acetoacetate and fumarate from L-phenylalanine: step 3/6. The protein is 4-hydroxyphenylpyruvate dioxygenase (HPD4) of Pyricularia oryzae (strain 70-15 / ATCC MYA-4617 / FGSC 8958) (Rice blast fungus).